Here is a 778-residue protein sequence, read N- to C-terminus: Endonuclease MutS2 (778 aa).

Residue 329 to 336 (GPNTGGKT) coordinates ATP. A Smr domain is found at 703–778 (LDLRGKRYEE…GSGCTIVTFK (76 aa)).

It belongs to the DNA mismatch repair MutS family. MutS2 subfamily. As to quaternary structure, homodimer. Binds to stalled ribosomes, contacting rRNA.

Functionally, endonuclease that is involved in the suppression of homologous recombination and thus may have a key role in the control of bacterial genetic diversity. Its function is as follows. Acts as a ribosome collision sensor, splitting the ribosome into its 2 subunits. Detects stalled/collided 70S ribosomes which it binds and splits by an ATP-hydrolysis driven conformational change. Acts upstream of the ribosome quality control system (RQC), a ribosome-associated complex that mediates the extraction of incompletely synthesized nascent chains from stalled ribosomes and their subsequent degradation. Probably generates substrates for RQC. This Streptococcus suis (strain 98HAH33) protein is Endonuclease MutS2.